Reading from the N-terminus, the 134-residue chain is D-ribose pyranase (134 aa).

Residue His-20 is the Proton donor of the active site. Substrate contacts are provided by residues Asp-28, His-101, and Tyr-123 to Asn-125.

Belongs to the RbsD / FucU family. RbsD subfamily. Homodecamer.

The protein localises to the cytoplasm. It carries out the reaction beta-D-ribopyranose = beta-D-ribofuranose. It participates in carbohydrate metabolism; D-ribose degradation; D-ribose 5-phosphate from beta-D-ribopyranose: step 1/2. Its function is as follows. Catalyzes the interconversion of beta-pyran and beta-furan forms of D-ribose. The chain is D-ribose pyranase from Pseudomonas entomophila (strain L48).